Reading from the N-terminus, the 350-residue chain is DNA-directed RNA polymerase subunit alpha (350 aa).

The segment at 1–226 (MLISQRPTLS…ELFGLARELN (226 aa)) is alpha N-terminal domain (alpha-NTD). Residues 241–350 (ADHIASFALP…NQDYAETEQL (110 aa)) form an alpha C-terminal domain (alpha-CTD) region. The disordered stretch occupies residues 326–350 (ATGTWNSDAGYDLEDNQDYAETEQL). Over residues 336-350 (YDLEDNQDYAETEQL) the composition is skewed to acidic residues.

It belongs to the RNA polymerase alpha chain family. In terms of assembly, homodimer. The RNAP catalytic core consists of 2 alpha, 1 beta, 1 beta' and 1 omega subunit. When a sigma factor is associated with the core the holoenzyme is formed, which can initiate transcription.

The catalysed reaction is RNA(n) + a ribonucleoside 5'-triphosphate = RNA(n+1) + diphosphate. DNA-dependent RNA polymerase catalyzes the transcription of DNA into RNA using the four ribonucleoside triphosphates as substrates. The polypeptide is DNA-directed RNA polymerase subunit alpha (Mycobacterium sp. (strain JLS)).